An 803-amino-acid polypeptide reads, in one-letter code: Translation initiation factor IF-2 (803 aa).

2 disordered regions span residues 93–123 (TKPV…LNEK) and 138–206 (EVKE…ASAK). Residues 111–121 (VPPTSDTTNLN) are compositionally biased toward polar residues. The span at 138–155 (EVKEEAKKTPSEKKETPK) shows a compositional bias: basic and acidic residues. A compositionally biased stretch (basic residues) spans 156–167 (KGPRKETRRSRK). Basic and acidic residues predominate over residues 168 to 188 (PDKEDKWEREELHMTKLVEER). One can recognise a tr-type G domain in the interval 302 to 471 (PRAPVVTIMG…LLQAEVLELK (170 aa)). The segment at 311–318 (GHVDHGKT) is G1. 311-318 (GHVDHGKT) contributes to the GTP binding site. The segment at 336–340 (GITQH) is G2. Residues 357-360 (DTPG) form a G3 region. GTP-binding positions include 357-361 (DTPGH) and 411-414 (NKID). Positions 411-414 (NKID) are G4. Residues 447-449 (SAK) are G5.

It belongs to the TRAFAC class translation factor GTPase superfamily. Classic translation factor GTPase family. IF-2 subfamily.

The protein localises to the cytoplasm. Functionally, one of the essential components for the initiation of protein synthesis. Protects formylmethionyl-tRNA from spontaneous hydrolysis and promotes its binding to the 30S ribosomal subunits. Also involved in the hydrolysis of GTP during the formation of the 70S ribosomal complex. This chain is Translation initiation factor IF-2, found in Coxiella burnetii (strain RSA 493 / Nine Mile phase I).